The primary structure comprises 154 residues: Large ribosomal subunit protein uL22c (154 aa).

The protein belongs to the universal ribosomal protein uL22 family. As to quaternary structure, part of the 50S ribosomal subunit.

It is found in the plastid. It localises to the chloroplast. In terms of biological role, this protein binds specifically to 23S rRNA. The globular domain of the protein is located near the polypeptide exit tunnel on the outside of the subunit, while an extended beta-hairpin is found that lines the wall of the exit tunnel in the center of the 70S ribosome. This Helianthus annuus (Common sunflower) protein is Large ribosomal subunit protein uL22c (rpl22).